Consider the following 674-residue polypeptide: DNA mismatch repair protein MutL (674 aa).

The protein belongs to the DNA mismatch repair MutL/HexB family.

Functionally, this protein is involved in the repair of mismatches in DNA. It is required for dam-dependent methyl-directed DNA mismatch repair. May act as a 'molecular matchmaker', a protein that promotes the formation of a stable complex between two or more DNA-binding proteins in an ATP-dependent manner without itself being part of a final effector complex. This Clostridium perfringens (strain 13 / Type A) protein is DNA mismatch repair protein MutL.